The following is a 364-amino-acid chain: tRNA 2-selenouridine synthase (364 aa).

The 124-residue stretch at Leu14–Ile137 folds into the Rhodanese domain. Residue Cys97 is the S-selanylcysteine intermediate of the active site.

It belongs to the SelU family. In terms of assembly, monomer.

It carries out the reaction 5-methylaminomethyl-2-thiouridine(34) in tRNA + selenophosphate + (2E)-geranyl diphosphate + H2O + H(+) = 5-methylaminomethyl-2-selenouridine(34) in tRNA + (2E)-thiogeraniol + phosphate + diphosphate. The enzyme catalyses 5-methylaminomethyl-2-thiouridine(34) in tRNA + (2E)-geranyl diphosphate = 5-methylaminomethyl-S-(2E)-geranyl-thiouridine(34) in tRNA + diphosphate. It catalyses the reaction 5-methylaminomethyl-S-(2E)-geranyl-thiouridine(34) in tRNA + selenophosphate + H(+) = 5-methylaminomethyl-2-(Se-phospho)selenouridine(34) in tRNA + (2E)-thiogeraniol. The catalysed reaction is 5-methylaminomethyl-2-(Se-phospho)selenouridine(34) in tRNA + H2O = 5-methylaminomethyl-2-selenouridine(34) in tRNA + phosphate. Functionally, involved in the post-transcriptional modification of the uridine at the wobble position (U34) of tRNA(Lys), tRNA(Glu) and tRNA(Gln). Catalyzes the conversion of 2-thiouridine (S2U-RNA) to 2-selenouridine (Se2U-RNA). Acts in a two-step process involving geranylation of 2-thiouridine (S2U) to S-geranyl-2-thiouridine (geS2U) and subsequent selenation of the latter derivative to 2-selenouridine (Se2U) in the tRNA chain. This is tRNA 2-selenouridine synthase from Shigella flexneri serotype 5b (strain 8401).